The sequence spans 340 residues: Outer membrane protein U (340 aa).

The signal sequence occupies residues 1–21 (MKKTLIALSVSAAAVATGVNA).

Belongs to the Gram-negative porin family. As to quaternary structure, homotrimer.

It is found in the cell outer membrane. Its function is as follows. Forms pores that allow passive diffusion of small molecules across the outer membrane. This is Outer membrane protein U (ompU) from Vibrio vulnificus (strain CMCP6).